Here is a 467-residue protein sequence, read N- to C-terminus: Cobyrinate a,c-diamide synthase (467 aa).

A GATase cobBQ-type domain is found at 256-449; that stretch reads RVGYAADQAF…AHIHVEGAPE (194 aa). Catalysis depends on Cys338, which acts as the Nucleophile.

This sequence belongs to the CobB/CbiA family. Mg(2+) is required as a cofactor.

The catalysed reaction is cob(II)yrinate + 2 L-glutamine + 2 ATP + 2 H2O = cob(II)yrinate a,c diamide + 2 L-glutamate + 2 ADP + 2 phosphate + 2 H(+). The protein operates within cofactor biosynthesis; adenosylcobalamin biosynthesis; cob(II)yrinate a,c-diamide from sirohydrochlorin (anaerobic route): step 10/10. Functionally, catalyzes the ATP-dependent amidation of the two carboxylate groups at positions a and c of cobyrinate, using either L-glutamine or ammonia as the nitrogen source. This Magnetococcus marinus (strain ATCC BAA-1437 / JCM 17883 / MC-1) protein is Cobyrinate a,c-diamide synthase.